The primary structure comprises 483 residues: Glutamyl-tRNA(Gln) amidotransferase subunit A (483 aa).

Active-site charge relay system residues include Lys76 and Ser151. Catalysis depends on Ser175, which acts as the Acyl-ester intermediate.

The protein belongs to the amidase family. GatA subfamily. Heterotrimer of A, B and C subunits.

The catalysed reaction is L-glutamyl-tRNA(Gln) + L-glutamine + ATP + H2O = L-glutaminyl-tRNA(Gln) + L-glutamate + ADP + phosphate + H(+). Its function is as follows. Allows the formation of correctly charged Gln-tRNA(Gln) through the transamidation of misacylated Glu-tRNA(Gln) in organisms which lack glutaminyl-tRNA synthetase. The reaction takes place in the presence of glutamine and ATP through an activated gamma-phospho-Glu-tRNA(Gln). The chain is Glutamyl-tRNA(Gln) amidotransferase subunit A from Pseudomonas fluorescens (strain ATCC BAA-477 / NRRL B-23932 / Pf-5).